The following is a 248-amino-acid chain: Protein canopy homolog 4 (248 aa).

The signal sequence occupies residues 1 to 21 (MGPVRLGILLFLFLAVHEAWA). 3 disulfide bridges follow: C38–C196, C41–C184, and C94–C156. The segment at 200-248 (TWTGKEITDGEEKTEGEEEQEEEEEEEEEEGGDKMTKTGSHPKLDREDL) is disordered. Residues 213-230 (TEGEEEQEEEEEEEEEEG) show a composition bias toward acidic residues. Over residues 231 to 248 (GDKMTKTGSHPKLDREDL) the composition is skewed to basic and acidic residues.

The protein belongs to the canopy family. In terms of assembly, interacts with TLR4.

Its subcellular location is the secreted. In terms of biological role, plays a role in the regulation of the cell surface expression of TLR4. The protein is Protein canopy homolog 4 (CNPY4) of Homo sapiens (Human).